Here is a 156-residue protein sequence, read N- to C-terminus: Superoxide dismutase [Cu-Zn] 2 (156 aa).

3 residues coordinate Cu cation: His47, His49, and His64. An intrachain disulfide couples Cys58 to Cys147. Zn(2+)-binding residues include His64, His72, His81, and Asp84. Position 121 (His121) interacts with Cu cation.

Belongs to the Cu-Zn superoxide dismutase family. As to quaternary structure, homodimer. Cu cation is required as a cofactor. It depends on Zn(2+) as a cofactor.

Its subcellular location is the cytoplasm. It catalyses the reaction 2 superoxide + 2 H(+) = H2O2 + O2. Destroys radicals which are normally produced within the cells and which are toxic to biological systems. The chain is Superoxide dismutase [Cu-Zn] 2 (SODCC.2) from Mesembryanthemum crystallinum (Common ice plant).